Consider the following 365-residue polypeptide: Phospho-N-acetylmuramoyl-pentapeptide-transferase (365 aa).

Helical transmembrane passes span 3–23 (HIIIGGAVSFIIAILFTPILI), 54–74 (GIAIIVAIVGGYFLAHLASVF), 81–101 (PTASGLLVLGLTVGMGFLGFL), 119–139 (GKLLGQAVLAIGFGVLCLLFL), 162–182 (IAIGGGIIGTLIFLLFIYILV), 198–218 (LAAGTTAIVMAAYSIMTFWQF), 239–259 (LSILAACGLGACLGFLWWNAA), 263–283 (IFMGDTGSLALGGLVAGLSVT), 289–309 (LMIVIGALFVAETISVVIQVV), and 342–362 (FWLLTAMFAVAGVSMFYADWL).

Belongs to the glycosyltransferase 4 family. MraY subfamily. Mg(2+) is required as a cofactor.

The protein resides in the cell membrane. The enzyme catalyses UDP-N-acetyl-alpha-D-muramoyl-L-alanyl-gamma-D-glutamyl-meso-2,6-diaminopimeloyl-D-alanyl-D-alanine + di-trans,octa-cis-undecaprenyl phosphate = di-trans,octa-cis-undecaprenyl diphospho-N-acetyl-alpha-D-muramoyl-L-alanyl-D-glutamyl-meso-2,6-diaminopimeloyl-D-alanyl-D-alanine + UMP. It participates in cell wall biogenesis; peptidoglycan biosynthesis. In terms of biological role, catalyzes the initial step of the lipid cycle reactions in the biosynthesis of the cell wall peptidoglycan: transfers peptidoglycan precursor phospho-MurNAc-pentapeptide from UDP-MurNAc-pentapeptide onto the lipid carrier undecaprenyl phosphate, yielding undecaprenyl-pyrophosphoryl-MurNAc-pentapeptide, known as lipid I. This Corynebacterium kroppenstedtii (strain DSM 44385 / JCM 11950 / CIP 105744 / CCUG 35717) protein is Phospho-N-acetylmuramoyl-pentapeptide-transferase.